We begin with the raw amino-acid sequence, 465 residues long: UDP-N-acetylmuramoylalanine--D-glutamate ligase (465 aa).

ATP is bound at residue 112-118 (GTDGKTT).

This sequence belongs to the MurCDEF family.

Its subcellular location is the cytoplasm. The catalysed reaction is UDP-N-acetyl-alpha-D-muramoyl-L-alanine + D-glutamate + ATP = UDP-N-acetyl-alpha-D-muramoyl-L-alanyl-D-glutamate + ADP + phosphate + H(+). It participates in cell wall biogenesis; peptidoglycan biosynthesis. Functionally, cell wall formation. Catalyzes the addition of glutamate to the nucleotide precursor UDP-N-acetylmuramoyl-L-alanine (UMA). This chain is UDP-N-acetylmuramoylalanine--D-glutamate ligase, found in Chlorobium limicola (strain DSM 245 / NBRC 103803 / 6330).